A 489-amino-acid chain; its full sequence is MDYFKTDLASLHADLVAKKISARELTQATFDNIKTTDAQVDAFLTLNEDAALKQATKIDEQGVATDQPLAGIPVALKDNIVTKGLKTTAASKMLANFNPVYDATVTEKLAQAQMITVGKTNLDEFAMGGSTENSAFKTTKNAWDYTKVPGGSSGGSAAAVASGQVLAALGSDTGGSIRQPAAFNGIVGLKPTYGRVSRWGLIAFGSSLDQIGPMTRSVKDNATMLSAIAGHDEHDLTSSTQPVPDFAADLTDATSVKGMRIGLPKEFLADGVADDVKQAILAAADTYRQLGATVDEVSLPHNKYGVAAYYIIGSSEASSNLQRFDGIRYGHRADDVKNLEDVYVKSRSEGFGDEVKRRIMLGTFSLSAGFYDAYFLKAAKVRTVIMNDFKAVLKDHDFIMGPVAPTPAFGIGDEIKDPITMYMNDVLTIPVNLAGLPGLSLPAGFSQGLPVGMQLIGRPFDESTLYKAGYAFEQNTDFHLQVPTLGGQH.

Catalysis depends on charge relay system residues K77 and S152. Residue S176 is the Acyl-ester intermediate of the active site.

Belongs to the amidase family. GatA subfamily. As to quaternary structure, heterotrimer of A, B and C subunits.

The catalysed reaction is L-glutamyl-tRNA(Gln) + L-glutamine + ATP + H2O = L-glutaminyl-tRNA(Gln) + L-glutamate + ADP + phosphate + H(+). In terms of biological role, allows the formation of correctly charged Gln-tRNA(Gln) through the transamidation of misacylated Glu-tRNA(Gln) in organisms which lack glutaminyl-tRNA synthetase. The reaction takes place in the presence of glutamine and ATP through an activated gamma-phospho-Glu-tRNA(Gln). The protein is Glutamyl-tRNA(Gln) amidotransferase subunit A of Levilactobacillus brevis (strain ATCC 367 / BCRC 12310 / CIP 105137 / JCM 1170 / LMG 11437 / NCIMB 947 / NCTC 947) (Lactobacillus brevis).